Here is a 188-residue protein sequence, read N- to C-terminus: Xanthine phosphoribosyltransferase (188 aa).

2 residues coordinate xanthine: Leu20 and Asn27. 127 to 131 (AYGNA) serves as a coordination point for 5-phospho-alpha-D-ribose 1-diphosphate. A xanthine-binding site is contributed by Lys155.

This sequence belongs to the purine/pyrimidine phosphoribosyltransferase family. Xpt subfamily. Homodimer.

Its subcellular location is the cytoplasm. It carries out the reaction XMP + diphosphate = xanthine + 5-phospho-alpha-D-ribose 1-diphosphate. The protein operates within purine metabolism; XMP biosynthesis via salvage pathway; XMP from xanthine: step 1/1. Functionally, converts the preformed base xanthine, a product of nucleic acid breakdown, to xanthosine 5'-monophosphate (XMP), so it can be reused for RNA or DNA synthesis. This Parabacteroides distasonis (strain ATCC 8503 / DSM 20701 / CIP 104284 / JCM 5825 / NCTC 11152) protein is Xanthine phosphoribosyltransferase.